A 159-amino-acid polypeptide reads, in one-letter code: Large ribosomal subunit protein bL35c (159 aa).

A chloroplast-targeting transit peptide spans 1-86 (MAMASATATL…TSSPSFTVFA (86 aa)).

As to quaternary structure, component of the chloroplast large ribosomal subunit (LSU). Mature 70S chloroplast ribosomes of higher plants consist of a small (30S) and a large (50S) subunit. The 30S small subunit contains 1 molecule of ribosomal RNA (16S rRNA) and 24 different proteins. The 50S large subunit contains 3 rRNA molecules (23S, 5S and 4.5S rRNA) and 33 different proteins.

The protein localises to the plastid. It localises to the chloroplast. In terms of biological role, component of the chloroplast ribosome (chloro-ribosome), a dedicated translation machinery responsible for the synthesis of chloroplast genome-encoded proteins, including proteins of the transcription and translation machinery and components of the photosynthetic apparatus. The chain is Large ribosomal subunit protein bL35c (RPL35) from Spinacia oleracea (Spinach).